Here is a 66-residue protein sequence, read N- to C-terminus: Cold shock protein 2 (66 aa).

In terms of domain architecture, CSD spans 4–63 (GTVKWFNADKGFGFITGEDGTDVFVHFSAIQTDGFKTLDEGQKVTYDEEQGDRGPQATNV).

It localises to the cytoplasm. This Lactiplantibacillus plantarum (strain ATCC BAA-793 / NCIMB 8826 / WCFS1) (Lactobacillus plantarum) protein is Cold shock protein 2 (cspL).